The sequence spans 451 residues: G-protein coupled receptor 61 (451 aa).

A compositionally biased stretch (low complexity) spans 1–14 (MESSPIPQSSGNSS). Residues 1 to 31 (MESSPIPQSSGNSSTLGRVPQTPGPSTASGV) form a disordered region. The Extracellular segment spans residues 1–44 (MESSPIPQSSGNSSTLGRVPQTPGPSTASGVPEVGLRDVASESV). A glycan (N-linked (GlcNAc...) asparagine) is linked at Asn12. A helical membrane pass occupies residues 45–67 (ALFFMLLLDLTAVAGNAAVMAVI). The Cytoplasmic segment spans residues 68–75 (AKTPALRK). A helical membrane pass occupies residues 76–98 (FVFVFHLCLVDLLAALTLMPLAM). The Extracellular segment spans residues 99-112 (LSSSALFDHALFGE). Residues 113–135 (VACRLYLFLSVCFVSLAILSVSA) traverse the membrane as a helical segment. Residues 136 to 155 (INVERYYYVVHPMRYEVRMT) lie on the Cytoplasmic side of the membrane. The helical transmembrane segment at 156–178 (LGLVASVLVGVWVKALAMASVPV) threads the bilayer. Residues 179-206 (LGRVSWEEGAPSVPPGCSLQWSHSAYCQ) lie on the Extracellular side of the membrane. The helical transmembrane segment at 207–229 (LFVVVFAVLYFLLPLLLILVVYC) threads the bilayer. Residues 230–287 (SMFRVARVAAMQHGPLPTWMETPRQRSESLSSRSTMVTSSGAPQTTPHRTFGGGKAAV) are Cytoplasmic-facing. Residues 288-310 (VLLAVGGQFLLCWLPYFSFHLYV) traverse the membrane as a helical segment. The Extracellular segment spans residues 311 to 324 (ALSAQPISTGQVES). The helical transmembrane segment at 325–344 (VVTWIGYFCFTSNPFFYGCL) threads the bilayer. The Cytoplasmic portion of the chain corresponds to 345 to 451 (NRQIRGELSK…RPAASPRLES (107 aa)).

The protein belongs to the G-protein coupled receptor 1 family. Forms heterodimer with MTNR1B. Interacts with ARRB1 and ARRB2 in a spontaneous and agonist-independent manner; leading to the internalization of GPR61 in the endosomal compartment. Expressed in brain; detected in frontal and temporal lobes, occipital pole, amygdala and hippocampus. Also expressed in testis and T cells, B cells, and monocyte. Low expression in many other tissues. Widely expressed in the hippocampus (at protein level).

Its subcellular location is the cell membrane. The protein resides in the endosome membrane. Its function is as follows. Orphan G-protein coupled receptor. Constitutively activates the G(s)-alpha/cAMP signaling pathway. Shows a reciprocal regulatory interaction with the melatonin receptor MTNR1B most likely through receptor heteromerization. May be involved in the regulation of food intake and body weight. This chain is G-protein coupled receptor 61 (GPR61), found in Homo sapiens (Human).